Consider the following 339-residue polypeptide: Ketol-acid reductoisomerase (NADP(+)) (339 aa).

One can recognise a KARI N-terminal Rossmann domain in the interval 1–182; that stretch reads MRVYYDRDAD…GGGRSGIIET (182 aa). NADP(+)-binding positions include 24–27, R48, S51, T53, and 83–86; these read YGSQ and DEHQ. Residue H108 is part of the active site. Residue G134 participates in NADP(+) binding. Residues 183–328 form the KARI C-terminal knotted domain; the sequence is NFREECETDL…ARLRGMMPWI (146 aa). D191, E195, E227, and E231 together coordinate Mg(2+). S252 serves as a coordination point for substrate.

This sequence belongs to the ketol-acid reductoisomerase family. The cofactor is Mg(2+).

It catalyses the reaction (2R)-2,3-dihydroxy-3-methylbutanoate + NADP(+) = (2S)-2-acetolactate + NADPH + H(+). It carries out the reaction (2R,3R)-2,3-dihydroxy-3-methylpentanoate + NADP(+) = (S)-2-ethyl-2-hydroxy-3-oxobutanoate + NADPH + H(+). The protein operates within amino-acid biosynthesis; L-isoleucine biosynthesis; L-isoleucine from 2-oxobutanoate: step 2/4. It participates in amino-acid biosynthesis; L-valine biosynthesis; L-valine from pyruvate: step 2/4. Involved in the biosynthesis of branched-chain amino acids (BCAA). Catalyzes an alkyl-migration followed by a ketol-acid reduction of (S)-2-acetolactate (S2AL) to yield (R)-2,3-dihydroxy-isovalerate. In the isomerase reaction, S2AL is rearranged via a Mg-dependent methyl migration to produce 3-hydroxy-3-methyl-2-ketobutyrate (HMKB). In the reductase reaction, this 2-ketoacid undergoes a metal-dependent reduction by NADPH to yield (R)-2,3-dihydroxy-isovalerate. The polypeptide is Ketol-acid reductoisomerase (NADP(+)) (Caulobacter vibrioides (strain ATCC 19089 / CIP 103742 / CB 15) (Caulobacter crescentus)).